The sequence spans 122 residues: Serum amyloid A-3 protein (122 aa).

Residues 1–18 form the signal peptide; the sequence is MKLSIGIIFCFLILGVNS. Positions 88–122 are disordered; sequence GRGAEDSKADQEANQWGRSGNDPNHFRPKGLPDKY. The segment covering 99–109 has biased composition (polar residues); that stretch reads EANQWGRSGND.

It belongs to the SAA family. In terms of tissue distribution, expressed by the liver; secreted in plasma. Expressed in synovial fibroblasts.

The protein resides in the secreted. Major acute phase reactant. Apolipoprotein of the HDL complex. In vitro exhibits antimicrobial activity against Escherichia coli, Streptococcus uberis and Pseudomonas aeruginosa. In Oryctolagus cuniculus (Rabbit), this protein is Serum amyloid A-3 protein (SAA3).